Reading from the N-terminus, the 434-residue chain is MPDRDSYANGTGSSGGGPGGGGSEEASGAGVGSGGASSDAICRDFLRNVCKRGKRCRYRHPDMSEVSNLGVSKNEFIFCHDFQNKECSRPNCRFIHGSKEDEDGYKKTGELPPRLRQKVAAGLGLSPADLPNGKEEVPICRDFLKGDCQRGAKCKFRHLQRDFEFDARGGGGTGGGSTGSVLPGRRHDLYDIYDLPDRGFEDHEPGPKRRRGGCCPPDGPHFESYEYSLAPPRGVECRLLEEENAMLRKRVEELKKQVSNLLATNEVLLEQNAQFRNQAKVITLSSTAPATEQTLAPTVGTVATFNHGIAQTHTTLSSQALQPRPVSQQELVAPAGAPAAPPTNAAPPAAPPPPPPHLTPEITPLSAALAQTIAQGMAPPPVSMAPVAVSVAPVAPVAVSMAQPLAGITMSHTTTPMVTYPIASQSMRITAMPH.

The interval 1-37 (MPDRDSYANGTGSSGGGPGGGGSEEASGAGVGSGGAS) is disordered. Positions 12-35 (GSSGGGPGGGGSEEASGAGVGSGG) are enriched in gly residues. 3 consecutive C3H1-type zinc fingers follow at residues 36–63 (ASSDAICRDFLRNVCKRGKRCRYRHPDM), 73–99 (KNEFIFCHDFQNKECSRPNCRFIHGSK), and 134–161 (KEEVPICRDFLKGDCQRGAKCKFRHLQR). Omega-N-methylarginine occurs at positions 185 and 186. Over residues 196–207 (PDRGFEDHEPGP) the composition is skewed to basic and acidic residues. The disordered stretch occupies residues 196–217 (PDRGFEDHEPGPKRRRGGCCPP). Residues 234–280 (GVECRLLEEENAMLRKRVEELKKQVSNLLATNEVLLEQNAQFRNQAK) adopt a coiled-coil conformation. Over residues 314–330 (TTLSSQALQPRPVSQQE) the composition is skewed to polar residues. Residues 314-362 (TTLSSQALQPRPVSQQELVAPAGAPAAPPTNAAPPAAPPPPPPHLTPEI) form a disordered region. The segment covering 339–358 (AAPPTNAAPPAAPPPPPPHL) has biased composition (pro residues).

It localises to the nucleus. Its function is as follows. Specific regulator of miRNA biogenesis. Binds, via the C3H1-type zinc finger domains, to the binding motif 5'-GCAGCGC-3' on microRNA pri-MIR143 and negatively regulates the processing to mature microRNA. This Homo sapiens (Human) protein is Zinc finger CCCH domain-containing protein 10 (ZC3H10).